The sequence spans 425 residues: Adenylosuccinate synthetase (425 aa).

GTP contacts are provided by residues 12–18 (GDEGKGK) and 40–42 (GHT). Residue Asp13 is the Proton acceptor of the active site. Mg(2+) contacts are provided by Asp13 and Gly40. Residues 13 to 16 (DEGK), 38 to 41 (NAGH), Thr129, Arg143, Asn221, Thr236, and Arg300 contribute to the IMP site. The active-site Proton donor is His41. A substrate-binding site is contributed by 296 to 302 (VTTGRKR). Residues Arg302, 328-330 (KLD), and 410-412 (GVG) contribute to the GTP site.

This sequence belongs to the adenylosuccinate synthetase family. As to quaternary structure, homodimer. The cofactor is Mg(2+).

It is found in the cytoplasm. It carries out the reaction IMP + L-aspartate + GTP = N(6)-(1,2-dicarboxyethyl)-AMP + GDP + phosphate + 2 H(+). It participates in purine metabolism; AMP biosynthesis via de novo pathway; AMP from IMP: step 1/2. Functionally, plays an important role in the de novo pathway and in the salvage pathway of purine nucleotide biosynthesis. Catalyzes the first committed step in the biosynthesis of AMP from IMP. The sequence is that of Adenylosuccinate synthetase from Phaeosphaeria nodorum (strain SN15 / ATCC MYA-4574 / FGSC 10173) (Glume blotch fungus).